The chain runs to 242 residues: NLP effector protein 8 (242 aa).

The signal sequence occupies residues 1-17; sequence MHLTVFYLVALCTFASA. The Conserved undecapeptide motif motif lies at 108 to 118; sequence AIMYAWYFPRD. The short motif at 127–133 is the Conserved heptapeptide motif element; sequence GHRNAWE. N-linked (GlcNAc...) asparagine glycosylation occurs at N206.

The protein belongs to the Necrosis inducing protein (NPP1) family.

It is found in the secreted. Its function is as follows. Probable secreted effector that may act as a pathogen-associated molecular pattern (PAMP) recognized by the plant immune system. The protein is NLP effector protein 8 of Plasmopara viticola (Downy mildew of grapevine).